Reading from the N-terminus, the 507-residue chain is 3-oxosteroid 1-dehydrogenase (507 aa).

FAD is bound at residue 9 to 38; that stretch reads DLLVVGSGGGALTGAYTAAAQGLTTIVLEK. Residues 299–385 form a disordered region; the sequence is GLVVDSPGSV…LPRPDYRPER (87 aa).

This sequence belongs to the FAD-dependent oxidoreductase 2 family. 3-oxosteroid dehydrogenase subfamily. FAD is required as a cofactor.

The protein localises to the cell membrane. The catalysed reaction is a 3-oxosteroid + A = a 3-oxo-Delta(1)-steroid + AH2. The protein operates within lipid metabolism; steroid degradation. In terms of biological role, catalyzes the elimination of the C-1 and C-2 hydrogen atoms of the A-ring from the polycyclic ring structure of 3-ketosteroids. This Rhodococcus opacus (Nocardia opaca) protein is 3-oxosteroid 1-dehydrogenase.